Here is a 1014-residue protein sequence, read N- to C-terminus: Beta-galactosidase (1014 aa).

The active-site Proton donor is E460. The Nucleophile role is filled by E527.

This sequence belongs to the glycosyl hydrolase 2 family.

It carries out the reaction Hydrolysis of terminal non-reducing beta-D-galactose residues in beta-D-galactosides.. The chain is Beta-galactosidase (lacZ) from Halalkalibacterium halodurans (strain ATCC BAA-125 / DSM 18197 / FERM 7344 / JCM 9153 / C-125) (Bacillus halodurans).